The primary structure comprises 206 residues: Orotate phosphoribosyltransferase (206 aa).

5-phospho-alpha-D-ribose 1-diphosphate-binding positions include Arg-97, Lys-98, Lys-101, and 125–133 (NDVIASGRS). Arg-157 provides a ligand contact to orotate.

This sequence belongs to the purine/pyrimidine phosphoribosyltransferase family. PyrE subfamily. As to quaternary structure, homodimer. Mg(2+) is required as a cofactor.

The catalysed reaction is orotidine 5'-phosphate + diphosphate = orotate + 5-phospho-alpha-D-ribose 1-diphosphate. The protein operates within pyrimidine metabolism; UMP biosynthesis via de novo pathway; UMP from orotate: step 1/2. Its function is as follows. Catalyzes the transfer of a ribosyl phosphate group from 5-phosphoribose 1-diphosphate to orotate, leading to the formation of orotidine monophosphate (OMP). This chain is Orotate phosphoribosyltransferase, found in Chlamydia felis (strain Fe/C-56) (Chlamydophila felis).